The sequence spans 226 residues: 7-cyano-7-deazaguanine synthase (226 aa).

10–20 (FSGGQDSTTLA) contacts ATP. Positions 190, 205, 208, and 211 each coordinate Zn(2+).

The protein belongs to the QueC family. Zn(2+) serves as cofactor.

The catalysed reaction is 7-carboxy-7-deazaguanine + NH4(+) + ATP = 7-cyano-7-deazaguanine + ADP + phosphate + H2O + H(+). Its pathway is purine metabolism; 7-cyano-7-deazaguanine biosynthesis. In terms of biological role, catalyzes the ATP-dependent conversion of 7-carboxy-7-deazaguanine (CDG) to 7-cyano-7-deazaguanine (preQ(0)). The polypeptide is 7-cyano-7-deazaguanine synthase (Helicobacter pylori (strain Shi470)).